The following is a 699-amino-acid chain: Ubiquitin-like modifier-activating enzyme atg7 (699 aa).

The short motif at Gly-370–Gly-375 is the GXGXXG motif element. Catalysis depends on Cys-550, which acts as the Glycyl thioester intermediate. The tract at residues Met-680 to Ile-699 is disordered. A compositionally biased stretch (acidic residues) spans Trp-682–Ile-699.

It belongs to the ATG7 family. As to quaternary structure, homodimer.

Its subcellular location is the cytoplasm. It localises to the preautophagosomal structure. Its function is as follows. E1-like activating enzyme involved in the 2 ubiquitin-like systems required for cytoplasm to vacuole transport (Cvt) and autophagy. Activates atg12 for its conjugation with apg-4/atg5 and apg-6/atg8 for its conjugation with phosphatidylethanolamine. Both systems are needed for the apg-6/atg8 association to Cvt vesicles and autophagosomes membranes. Autophagy is essential for maintenance of amino acid levels and protein synthesis under nitrogen starvation. Required for selective autophagic degradation of the nucleus (nucleophagy) as well as for mitophagy which contributes to regulate mitochondrial quantity and quality by eliminating the mitochondria to a basal level to fulfill cellular energy requirements and preventing excess ROS production. Plays a role in the regulation of filamentous growth and chronological longevity. This is Ubiquitin-like modifier-activating enzyme atg7 (apg-5) from Neurospora crassa (strain ATCC 24698 / 74-OR23-1A / CBS 708.71 / DSM 1257 / FGSC 987).